We begin with the raw amino-acid sequence, 352 residues long: uncharacterized protein (352 aa).

The N-terminal stretch at 1-21 (MNVDSRVFRFFLVFLILVVVA) is a signal peptide.

This sequence belongs to the bacterial solute-binding protein 1 family. WtpA subfamily.

This is an uncharacterized protein from Methanosarcina acetivorans (strain ATCC 35395 / DSM 2834 / JCM 12185 / C2A).